A 131-amino-acid chain; its full sequence is Large ribosomal subunit protein bL12c (131 aa).

Residues 106 to 125 (KDNTNKENSEEIKQQLEEAG) are compositionally biased toward basic and acidic residues. Positions 106–131 (KDNTNKENSEEIKQQLEEAGAKVSIK) are disordered.

Belongs to the bacterial ribosomal protein bL12 family. Homodimer. Part of the ribosomal stalk of the 50S ribosomal subunit. Forms a multimeric L10(L12)X complex, where L10 forms an elongated spine to which 2 to 4 L12 dimers bind in a sequential fashion. Binds GTP-bound translation factors.

Its subcellular location is the plastid. The protein resides in the chloroplast. Functionally, forms part of the ribosomal stalk which helps the ribosome interact with GTP-bound translation factors. Is thus essential for accurate translation. The chain is Large ribosomal subunit protein bL12c from Gracilaria tenuistipitata var. liui (Red alga).